Here is a 160-residue protein sequence, read N- to C-terminus: Ribosomal RNA large subunit methyltransferase H (160 aa).

Residues Gly-108 and 127-132 (FGKMTW) each bind S-adenosyl-L-methionine.

This sequence belongs to the RNA methyltransferase RlmH family. As to quaternary structure, homodimer.

It localises to the cytoplasm. It carries out the reaction pseudouridine(1915) in 23S rRNA + S-adenosyl-L-methionine = N(3)-methylpseudouridine(1915) in 23S rRNA + S-adenosyl-L-homocysteine + H(+). Specifically methylates the pseudouridine at position 1915 (m3Psi1915) in 23S rRNA. This Beijerinckia indica subsp. indica (strain ATCC 9039 / DSM 1715 / NCIMB 8712) protein is Ribosomal RNA large subunit methyltransferase H.